A 201-amino-acid chain; its full sequence is UPF0301 protein RHA1_ro03630 (201 aa).

It belongs to the UPF0301 (AlgH) family.

This chain is UPF0301 protein RHA1_ro03630, found in Rhodococcus jostii (strain RHA1).